Reading from the N-terminus, the 61-residue chain is Small ribosomal subunit protein uS14 (61 aa).

Cys-24, Cys-27, Cys-40, and Cys-43 together coordinate Zn(2+).

It belongs to the universal ribosomal protein uS14 family. Zinc-binding uS14 subfamily. As to quaternary structure, part of the 30S ribosomal subunit. Contacts proteins S3 and S10. Zn(2+) is required as a cofactor.

Its function is as follows. Binds 16S rRNA, required for the assembly of 30S particles and may also be responsible for determining the conformation of the 16S rRNA at the A site. The sequence is that of Small ribosomal subunit protein uS14 from Thermus aquaticus.